We begin with the raw amino-acid sequence, 100 residues long: Putative PIN1-like protein (100 aa).

A compositionally biased stretch (basic and acidic residues) spans 1-15 (MADEEKLPPGWEKRM). Disordered regions lie at residues 1–52 (MADE…QGEP) and 69–100 (LDLA…REGL). A WW domain is found at 5 to 38 (EKLPPGWEKRMSRPSGRGYYFNHITNPSQWERPS). Residues 27–44 (HITNPSQWERPSGNSSSG) are compositionally biased toward polar residues. Over residues 87–100 (QRLHPEDQGRREGL) the composition is skewed to basic and acidic residues.

The sequence is that of Putative PIN1-like protein (PIN1P1) from Homo sapiens (Human).